The chain runs to 289 residues: Phosphatidylinositol:ceramide inositolphosphotransferase 3 (289 aa).

The next 5 helical transmembrane spans lie at 33–53 (LVLAGLVFQYIHGLAAHGVHY), 77–97 (AFFSETVFVTIFGSFILWTFH), 115–135 (VFVYLAASQSLRIITFFATQL), 169–189 (VIYGCGDLIFSSHTIFTLVFV), and 199–219 (RWIKHLAWLMAVIQSILIIAS). H181 is a catalytic residue. Catalysis depends on residues H222 and D226. A helical membrane pass occupies residues 223–243 (YTVDIVVAWYTVNLVMFYVDS). The segment at 249–289 (AERSSGPSPTPLLPLSTKDSKNKSKEDHQRLLNENNVADDH) is disordered. Residues 266–279 (KDSKNKSKEDHQRL) show a composition bias toward basic and acidic residues. A compositionally biased stretch (polar residues) spans 280 to 289 (LNENNVADDH).

The protein belongs to the sphingomyelin synthase family. Mostly expressed in stems and flowers, and, to a lower extent, in leaves, roots and siliques.

It is found in the membrane. In terms of biological role, catalyzes the transfer of the phosphorylinositol group from phosphatidylinositol (PI) to phytoceramide, an essential step in sphingolipid biosynthesis. The sequence is that of Phosphatidylinositol:ceramide inositolphosphotransferase 3 (IPCS3) from Arabidopsis thaliana (Mouse-ear cress).